The chain runs to 344 residues: MIEIKSVNKVFYQGDKQIHALKDINLFIPQGTIFGVIGSSGAGKSTLIRCVNMLEKPTSGQVIVDGVDLTTLSNPQLCAARRNIGMIFQHFNLLSSRTVFENVALPLELAGQSQQHIETKVTELLALVGLSEKRESYPANLSGGQKQRVAIARALASDPKVLLCDEATSALDPATTQSILELLKEINRQLNLTILLITHEMDVVKSICHEVAIIGGGELVEKGTVGDIFAHPKTELAHQFIRSTLDLSIPEDYQVRLQPTRVAGSYPLVRLEFTGATVDAPLMTQIARKYNIDVSILSSDLDYAGGVKFGMMVAEIFGNADDDEAAIRYLRENNVKVEVLGYVL.

In terms of domain architecture, ABC transporter spans 2 to 241 (IEIKSVNKVF…PKTELAHQFI (240 aa)). 38–45 (GSSGAGKS) is a binding site for ATP.

The protein belongs to the ABC transporter superfamily. Methionine importer (TC 3.A.1.24) family. The complex is composed of two ATP-binding proteins (MetN), two transmembrane proteins (MetI) and a solute-binding protein (MetQ).

The protein resides in the cell inner membrane. It carries out the reaction L-methionine(out) + ATP + H2O = L-methionine(in) + ADP + phosphate + H(+). The catalysed reaction is D-methionine(out) + ATP + H2O = D-methionine(in) + ADP + phosphate + H(+). Part of the ABC transporter complex MetNIQ involved in methionine import. Responsible for energy coupling to the transport system. In Vibrio cholerae serotype O1 (strain ATCC 39315 / El Tor Inaba N16961), this protein is Methionine import ATP-binding protein MetN.